Reading from the N-terminus, the 399-residue chain is MTSSTLLETPAAAADHDCASAPRSLAGLTRDGLAAALLEIGAPERELRMRTAQLWHWIYHRGAGSFDDMLNVSKVLRTQLAEKFTLARPQIVTEQVSTDGTRKWLIRFAPSAESDRLAEVECVYIPDVDRGTLCVSSQVGCTLTCSFCHTGTQKFVRNLTAQEIIAQLIIARDRIGDFPGLAPRDGKGSNSGSRLVTNIVFMGMGEPLYNLDNVVDAVSVLSDGDGLSLSRRRITVSTAGVVPKLPELGEKTGAMLAISLHAVRDELRNTLVPLNKKYPIAALLQACRDYPGASNARRITFEYVMLKGINDSPSDARELVRLLKGIPAKINLIPFNPWPGTAYECSDDAVIEKFSDIVFNAGYASPVRTPRGRDILAACGQLKSETEKLRARALLVAGD.

Glu-121 (proton acceptor) is an active-site residue. The Radical SAM core domain occupies 127–376 (DVDRGTLCVS…VRTPRGRDIL (250 aa)). An intrachain disulfide couples Cys-134 to Cys-379. Cys-141, Cys-145, and Cys-148 together coordinate [4Fe-4S] cluster. S-adenosyl-L-methionine contacts are provided by residues 205–206 (GE), Ser-237, 259–261 (SLH), and Asn-336. The active-site S-methylcysteine intermediate is Cys-379.

It belongs to the radical SAM superfamily. RlmN family. Requires [4Fe-4S] cluster as cofactor.

The protein localises to the cytoplasm. It carries out the reaction adenosine(2503) in 23S rRNA + 2 reduced [2Fe-2S]-[ferredoxin] + 2 S-adenosyl-L-methionine = 2-methyladenosine(2503) in 23S rRNA + 5'-deoxyadenosine + L-methionine + 2 oxidized [2Fe-2S]-[ferredoxin] + S-adenosyl-L-homocysteine. The catalysed reaction is adenosine(37) in tRNA + 2 reduced [2Fe-2S]-[ferredoxin] + 2 S-adenosyl-L-methionine = 2-methyladenosine(37) in tRNA + 5'-deoxyadenosine + L-methionine + 2 oxidized [2Fe-2S]-[ferredoxin] + S-adenosyl-L-homocysteine. Functionally, specifically methylates position 2 of adenine 2503 in 23S rRNA and position 2 of adenine 37 in tRNAs. m2A2503 modification seems to play a crucial role in the proofreading step occurring at the peptidyl transferase center and thus would serve to optimize ribosomal fidelity. This Methylocella silvestris (strain DSM 15510 / CIP 108128 / LMG 27833 / NCIMB 13906 / BL2) protein is Dual-specificity RNA methyltransferase RlmN.